A 369-amino-acid chain; its full sequence is Histidinol-phosphate aminotransferase 2 (369 aa).

Lys229 bears the N6-(pyridoxal phosphate)lysine mark.

It belongs to the class-II pyridoxal-phosphate-dependent aminotransferase family. Histidinol-phosphate aminotransferase subfamily. Homodimer. The cofactor is pyridoxal 5'-phosphate.

The enzyme catalyses L-histidinol phosphate + 2-oxoglutarate = 3-(imidazol-4-yl)-2-oxopropyl phosphate + L-glutamate. It participates in amino-acid biosynthesis; L-histidine biosynthesis; L-histidine from 5-phospho-alpha-D-ribose 1-diphosphate: step 7/9. This chain is Histidinol-phosphate aminotransferase 2 (hisC2), found in Pseudomonas aeruginosa (strain ATCC 15692 / DSM 22644 / CIP 104116 / JCM 14847 / LMG 12228 / 1C / PRS 101 / PAO1).